Consider the following 822-residue polypeptide: Pentatricopeptide repeat-containing protein At2g18940, chloroplastic (822 aa).

Residues 1–42 (MDGALFPHKPPYPIQSKRPPPSQSSNQSIKFSSATLHLPPPS) are disordered. The transit peptide at 1-77 (MDGALFPHKP…SAAARFPSLE (77 aa)) directs the protein to the chloroplast. Positions 8–22 (HKPPYPIQSKRPPPS) are enriched in pro residues. Low complexity predominate over residues 23 to 37 (QSSNQSIKFSSATLH). PPR repeat units lie at residues 209–243 (DVRA…GPSP), 244–279 (TLVT…GLKF), 280–314 (DEFT…GYEP), 315–349 (GTVT…SCPA), 350–384 (DSVT…GVMP), 385–419 (NAIT…GCVP), 420–454 (NTCT…GCSP), 455–489 (NRAT…GFEP), 490–524 (DRDT…GFNA), 525–559 (CVTT…GFKP), 560–594 (TETS…QIFP), 595–629 (SWML…GYKP), 630–664 (DMVI…GLSP), 665–699 (DLVT…QLKP), 700–734 (DLVS…GIRP), 735–769 (CIFT…DCRP), and 770–800 (NELT…IKTF).

It belongs to the PPR family. P subfamily.

Its subcellular location is the plastid. The protein resides in the chloroplast. This Arabidopsis thaliana (Mouse-ear cress) protein is Pentatricopeptide repeat-containing protein At2g18940, chloroplastic.